The following is a 602-amino-acid chain: Elongation factor 4 (602 aa).

The tr-type G domain occupies 7-189 (KYIRNFSIVA…AIVNKVPAPD (183 aa)). Residues 19 to 24 (DHGKST) and 136 to 139 (NKID) contribute to the GTP site.

This sequence belongs to the TRAFAC class translation factor GTPase superfamily. Classic translation factor GTPase family. LepA subfamily.

Its subcellular location is the cell membrane. It catalyses the reaction GTP + H2O = GDP + phosphate + H(+). In terms of biological role, required for accurate and efficient protein synthesis under certain stress conditions. May act as a fidelity factor of the translation reaction, by catalyzing a one-codon backward translocation of tRNAs on improperly translocated ribosomes. Back-translocation proceeds from a post-translocation (POST) complex to a pre-translocation (PRE) complex, thus giving elongation factor G a second chance to translocate the tRNAs correctly. Binds to ribosomes in a GTP-dependent manner. The chain is Elongation factor 4 from Clostridium botulinum (strain Kyoto / Type A2).